Consider the following 227-residue polypeptide: Lipoprotein-releasing system ATP-binding protein LolD (227 aa).

Positions 7–227 constitute an ABC transporter domain; the sequence is LKLTGVERHY…TISDGKVVEF (221 aa). ATP is bound at residue 43-50; the sequence is APSGTGKS.

This sequence belongs to the ABC transporter superfamily. Lipoprotein translocase (TC 3.A.1.125) family. In terms of assembly, the complex is composed of two ATP-binding proteins (LolD) and two transmembrane proteins (LolC and LolE).

It is found in the cell inner membrane. Its function is as follows. Part of the ABC transporter complex LolCDE involved in the translocation of mature outer membrane-directed lipoproteins, from the inner membrane to the periplasmic chaperone, LolA. Responsible for the formation of the LolA-lipoprotein complex in an ATP-dependent manner. The chain is Lipoprotein-releasing system ATP-binding protein LolD from Rhizobium etli (strain ATCC 51251 / DSM 11541 / JCM 21823 / NBRC 15573 / CFN 42).